The sequence spans 365 residues: SWR1 complex subunit 2 (365 aa).

Disordered regions lie at residues 43 to 83 (ALKE…NEKE) and 95 to 147 (PGKT…EGEK). The span at 48–74 (EHDDEYEAEREVADEFDSDFNDDEPEP) shows a compositional bias: acidic residues. The segment covering 99–108 (ASKKKKKKTK) has biased composition (basic residues). The span at 118–132 (GDEKPGEELGNKEQE) shows a compositional bias: basic and acidic residues. 2 coiled-coil regions span residues 123-150 (GEEL…KVIR) and 184-225 (GEEK…KAIV). Acidic residues predominate over residues 133-144 (EKEENEAQEDME). The interval 333–365 (RTKIPKSNKSFSLRSSARFLSSESEEESEEDSD) is disordered. Residues 342–354 (SFSLRSSARFLSS) show a composition bias toward low complexity. Residues 355–365 (ESEEESEEDSD) show a composition bias toward acidic residues.

Belongs to the VPS72/YL1 family. As to quaternary structure, component of the SWR1 chromatin-remodeling complex composed of at least ARP6/ESD1/SUF3, PIE1, SWC6, SWC2 and H2AZs (HTA8, HTA9, HTA11). Interacts directly with SWC6 and H2AZs, but not with ARP6.

In terms of biological role, component of the SWR1 complex which mediates the ATP-dependent exchange of histone H2A for the H2A variant H2A.F/Z leading to transcriptional regulation of selected genes (e.g. FLC) by chromatin remodeling. In Arabidopsis thaliana (Mouse-ear cress), this protein is SWR1 complex subunit 2 (SWC2).